The primary structure comprises 458 residues: ATP synthase subunit beta (458 aa).

Position 148–155 (Gly-148–Thr-155) interacts with ATP.

This sequence belongs to the ATPase alpha/beta chains family. In terms of assembly, F-type ATPases have 2 components, CF(1) - the catalytic core - and CF(0) - the membrane proton channel. CF(1) has five subunits: alpha(3), beta(3), gamma(1), delta(1), epsilon(1). CF(0) has three main subunits: a(1), b(2) and c(9-12). The alpha and beta chains form an alternating ring which encloses part of the gamma chain. CF(1) is attached to CF(0) by a central stalk formed by the gamma and epsilon chains, while a peripheral stalk is formed by the delta and b chains.

The protein resides in the cell inner membrane. The enzyme catalyses ATP + H2O + 4 H(+)(in) = ADP + phosphate + 5 H(+)(out). In terms of biological role, produces ATP from ADP in the presence of a proton gradient across the membrane. The catalytic sites are hosted primarily by the beta subunits. This is ATP synthase subunit beta from Francisella tularensis subsp. novicida (strain U112).